The sequence spans 383 residues: Probable lipid transporter atnI (383 aa).

The next 2 helical transmembrane spans lie at 46–66 (VLFS…AIMF) and 71–91 (AWVV…RSLF). Residue asparagine 94 is glycosylated (N-linked (GlcNAc...) asparagine). The next 5 membrane-spanning stretches (helical) occupy residues 104 to 124 (FTIF…MTLG), 144 to 164 (FGHI…VGAA), 182 to 202 (IYMG…GLFI), 231 to 251 (WLFY…IFRL), and 269 to 289 (WFEY…LNVA). The disordered stretch occupies residues 305–383 (VSRKEKKQRK…YDNRGNEVRP (79 aa)). The segment covering 307–316 (RKEKKQRKRE) has biased composition (basic residues). The segment covering 317 to 329 (KKEAKIAEKEAKK) has biased composition (basic and acidic residues).

It belongs to the lipid-translocating exporter (LTE) (TC 9.A.26.1) family.

It localises to the membrane. It participates in secondary metabolite biosynthesis. Functionally, probable lipid transporter; part of the gene cluster that mediates the biosynthesis of aspercryptins, linear lipopeptides built from six amino acids including 2 highly unusual and nonproteogenic amino acids, 2-amino-octanoic acid (2aoa) and 2-amino-dodecanol (2adol). The core structure of aspercryptins is as follows: Ser/Ala-Thr-Ile/Val-2aoa-Asn-2adol. The first step of aspercryptin biosynthesis is the generation of the fatty acid precursors, octanoic and dodecanoic acids, by the FAS subunits atnF and atnM. The fatty acid precursors are likely transformed into the corresponding alpha-amino fatty acids in three steps. First, they are hydroxylated by the cytochrome P450 monooxygenase atnE, then oxidized to the corresponding alpha-keto acids by the NAD(P)-dependent oxidoreductase atnD, and finally converted to the alpha-amino fatty acids by the PLP-dependent aminotransferases atnH or atnJ. the alpha-amino fatty acids, 2-amino-octanoic and 2-amino-dodecanoic acids, are recognized, activated, and covalently tethered to the NRPS atnA by its fourth and sixth adenylation domains. The second module of atnA is the Thr module and contains an epimerase (E) domain responsible for the epimerization of Thr to D-allo-Thr. Additionally, despite atnA having only one epimerase domain, the first amino acid of aspercryptin A1 is D-Ser, suggesting that serine is either loaded directly as D-Ser on the first module or that the epimerase domain in the threonine module epimerizes both L-Ser and L-Thr. After condensation of the hexapeptide of aspercryptin, the C-terminal reductase (TE) domain might be involved in the reductive release and production of the aldehyde hexapeptide. Further reduction would generate aspercryptins. The variety of aspercryptins produced reflects the flexibility of the atnA NRPS, allowing incorporation of alanine instead of serine, valine for isoleucine, and a C10 fatty amino alcohol instead of the C12 version. AtnB seems to be involved in the selectivity for Ile versus Val by the third module. Moreover, type B, C and D aspercryptins have an additional N-terminal cichorine, acetyl and propionyl group respectively. The protein is Probable lipid transporter atnI of Emericella nidulans (strain FGSC A4 / ATCC 38163 / CBS 112.46 / NRRL 194 / M139) (Aspergillus nidulans).